Reading from the N-terminus, the 811-residue chain is Phosphoinositide 3-kinase adapter protein 1 (811 aa).

The region spanning Arg8–Ser146 is the TIR domain. Residues Cys10–Asp145 form a necessary and sufficient to mediate inhibition of NF-kappa-B downstream of activated TLRs; may mediate interaction with MYD88 and TIRAP region. The disordered stretch occupies residues Ser146–Asn169. Residues Val182 to Phe318 enclose the DBB domain. Tyr264 carries the phosphotyrosine modification. Tyr420, Tyr445, and Tyr460 each carry phosphotyrosine; by SYK. Position 513 is a phosphotyrosine; by ABL1 (Tyr513). Residues Asp525–Glu551 are disordered. Over residues Pro530–Asn550 the composition is skewed to pro residues. Phosphotyrosine; by ABL1 occurs at positions 553, 570, and 594. The residue at position 642 (Ser642) is a Phosphoserine. Tyr694 is subject to Phosphotyrosine; by ABL1. The segment at Val702–Arg811 is disordered. A compositionally biased stretch (basic and acidic residues) spans Thr707 to Thr716. Over residues Asp717–Ser740 the composition is skewed to low complexity. Phosphoserine is present on Ser718. Positions His801–Arg811 are enriched in pro residues.

Homooligomer. Interacts (phosphorylated on tyrosine residues within YXXM motifs) with PIK3R1 (via SH2 domain); required for BCR- and TLR-mediated activation of phosphoinositide 3-kinase. Interacts (via polyproline C-terminal region) with ABI1 (via SH3 domain); the interaction promotes phosphorylation of PIK3AP1 by ABL1. May interact with MYD88 and TIRAP. In terms of processing, constitutively phosphorylated. Phosphorylated on tyrosine residues in C-terminal region by ABL1. Phosphorylated on tyrosine residues within the YXXM motifs by BTK and SYK. Isoform 1 and isoform 2 are phosphorylated on tyrosine residues, most likely within the YXXM motifs, via CD19 activation. Toll-like receptor activation induces appearance of a phosphorylated form associated with membranes. In terms of tissue distribution, predominantly expressed in spleen (at protein level). Expressed at lower levels in thymus, liver and lung. Expressed in B-cells, macrophages and natural killer (NK) cells.

Its subcellular location is the cytoplasm. It localises to the cell membrane. Signaling adapter that contributes to B-cell development by linking B-cell receptor (BCR) signaling to the phosphoinositide 3-kinase (PI3K)-Akt signaling pathway. Has a complementary role to the BCR coreceptor CD19, coupling BCR and PI3K activation by providing a docking site for the PI3K subunit PIK3R1. Alternatively, links Toll-like receptor (TLR) signaling to PI3K activation, a process preventing excessive inflammatory cytokine production. Also involved in the activation of PI3K in natural killer cells. May be involved in the survival of mature B-cells via activation of REL. The protein is Phosphoinositide 3-kinase adapter protein 1 (Pik3ap1) of Mus musculus (Mouse).